A 41-amino-acid chain; its full sequence is Large ribosomal subunit protein bL36 (41 aa).

Belongs to the bacterial ribosomal protein bL36 family.

The protein is Large ribosomal subunit protein bL36 of Azorhizobium caulinodans (strain ATCC 43989 / DSM 5975 / JCM 20966 / LMG 6465 / NBRC 14845 / NCIMB 13405 / ORS 571).